The primary structure comprises 214 residues: Thymidylate kinase (214 aa).

An ATP-binding site is contributed by 10-17; that stretch reads GPDGAGKT.

It belongs to the thymidylate kinase family.

It catalyses the reaction dTMP + ATP = dTDP + ADP. In terms of biological role, phosphorylation of dTMP to form dTDP in both de novo and salvage pathways of dTTP synthesis. In Limosilactobacillus fermentum (strain NBRC 3956 / LMG 18251) (Lactobacillus fermentum), this protein is Thymidylate kinase.